A 109-amino-acid polypeptide reads, in one-letter code: Parvalbumin alpha (109 aa).

Residue serine 1 is modified to N-acetylserine. EF-hand domains lie at 38-73 and 77-109; these read KSDA…FSDG and LNDK…AKMT. Residues aspartate 51, aspartate 53, serine 55, tyrosine 57, glutamate 59, glutamate 62, aspartate 90, aspartate 92, aspartate 94, lysine 96, and glutamate 101 each contribute to the Ca(2+) site.

This sequence belongs to the parvalbumin family. As to quaternary structure, monomer.

In muscle, parvalbumin is thought to be involved in relaxation after contraction. It binds two calcium ions. This Raja clavata (Thornback ray) protein is Parvalbumin alpha.